The chain runs to 387 residues: Succinate--CoA ligase [ADP-forming] subunit beta (387 aa).

Residues 9–245 (KDLLESYGLK…KSQENAKELK (237 aa)) form the ATP-grasp domain. Residues Lys-46, 53-55 (GRG), Glu-100, Tyr-103, and Glu-108 contribute to the ATP site. Mg(2+) is bound by residues Asn-200 and Asp-214. Substrate contacts are provided by residues Asn-265 and 322–324 (GIV).

Belongs to the succinate/malate CoA ligase beta subunit family. Heterotetramer of two alpha and two beta subunits. Mg(2+) serves as cofactor.

The catalysed reaction is succinate + ATP + CoA = succinyl-CoA + ADP + phosphate. It carries out the reaction GTP + succinate + CoA = succinyl-CoA + GDP + phosphate. The protein operates within carbohydrate metabolism; tricarboxylic acid cycle; succinate from succinyl-CoA (ligase route): step 1/1. Functionally, succinyl-CoA synthetase functions in the citric acid cycle (TCA), coupling the hydrolysis of succinyl-CoA to the synthesis of either ATP or GTP and thus represents the only step of substrate-level phosphorylation in the TCA. The beta subunit provides nucleotide specificity of the enzyme and binds the substrate succinate, while the binding sites for coenzyme A and phosphate are found in the alpha subunit. In Francisella tularensis subsp. mediasiatica (strain FSC147), this protein is Succinate--CoA ligase [ADP-forming] subunit beta.